Consider the following 391-residue polypeptide: Transposase for insertion sequence element IS905 (391 aa).

Belongs to the transposase mutator family.

Required for the transposition of the insertion element. The sequence is that of Transposase for insertion sequence element IS905 (tra905) from Lactococcus lactis subsp. lactis (strain IL1403) (Streptococcus lactis).